The primary structure comprises 622 residues: E3 ubiquitin-protein ligase RNF12-A (622 aa).

Disordered stretches follow at residues 1 to 26, 67 to 386, and 473 to 514; these read MESA…MDRL, RLQQ…ESER, and NANA…NSRG. Positions 11-21 are enriched in low complexity; the sequence is SIEQSESQRQS. 2 stretches are compositionally biased toward polar residues: residues 110–138 and 147–163; these read SVRQ…NPNS and INVN…SLDQ. Over residues 216-242 the composition is skewed to basic and acidic residues; sequence RSPDQRRTRARTDRSRSPLHHAVDPPI. Over residues 247 to 256 the composition is skewed to polar residues; that stretch reads HSSSQTVDTS. Residues 272–289 show a composition bias toward low complexity; the sequence is SSQVQNSSSSNETEGSSR. Positions 300-317 are enriched in polar residues; sequence VLGTEGQSQSTVHLSNPE. The span at 318 to 331 shows a compositional bias: low complexity; sequence TRSSSQTPQTDSST. Residues 332-341 show a composition bias toward polar residues; it reads NAETTGTGQR. The segment covering 355-365 has biased composition (basic and acidic residues); sequence RPGDYRQRDSI. Positions 366–382 are enriched in polar residues; the sequence is ANRTRSRSQTPNNTVTY. An RING-type; atypical zinc finger spans residues 568 to 609; that stretch reads CSVCITEYTEGNKLRKLPCSHEYHIHCIDRWLSENSTCPICR. Positions 619 to 622 match the PDZ-binding motif; that stretch reads ESIV.

It belongs to the RNF12 family. In terms of assembly, forms homodimers through the C-terminal region. The N-terminus interacts with the homeobox of LIM/homeobox factor lhx1/lim1, with lhx3/lim3 and lhx5/lim5, and with the N-terminus of ldb1. In terms of tissue distribution, shows overlapping expression with lhx1/lim1 and ldb1 in the gastrula mesoderm, and expression overlaps with ldb1 throughout early embryogenesis. After gastrulation, expression is gradually restricted to tissues originated from the ectoderm, the neuroectoderm, neural crest and epidermis, and subsequently to the neural tube as well as the head and tailbud region.

It localises to the nucleus. The enzyme catalyses S-ubiquitinyl-[E2 ubiquitin-conjugating enzyme]-L-cysteine + [acceptor protein]-L-lysine = [E2 ubiquitin-conjugating enzyme]-L-cysteine + N(6)-ubiquitinyl-[acceptor protein]-L-lysine.. It functions in the pathway protein modification; protein ubiquitination. Functionally, acts as an E3 ubiquitin-protein ligase specific for ldb1, mediating ubiquitination and proteasome-dependent degradation of excess ldb1 in a RING-dependent manner. Does not degrade ldb1 bound to lhx1/lim1, nor lim1 itself and thus contributes to the establishment of proper ldb1-lhx1/lim1 stoichiometry and the formation of a ldb1-lhx1/lim1 complex. Interferes with Spemann organizer function and suppresses secondary axis formation induced by ldb1 and lhx1/lim1. The protein is E3 ubiquitin-protein ligase RNF12-A (rnf12-a) of Xenopus laevis (African clawed frog).